A 264-amino-acid chain; its full sequence is S-adenosylmethionine decarboxylase proenzyme (264 aa).

Ser112 acts as the Schiff-base intermediate with substrate; via pyruvic acid in catalysis. Ser112 is modified (pyruvic acid (Ser); by autocatalysis). Catalysis depends on His117, which acts as the Proton acceptor; for processing activity. Cys140 functions as the Proton donor; for catalytic activity in the catalytic mechanism.

It belongs to the prokaryotic AdoMetDC family. Type 2 subfamily. Heterooctamer of four alpha and four beta chains arranged as a tetramer of alpha/beta heterodimers. The cofactor is pyruvate. In terms of processing, is synthesized initially as an inactive proenzyme. Formation of the active enzyme involves a self-maturation process in which the active site pyruvoyl group is generated from an internal serine residue via an autocatalytic post-translational modification. Two non-identical subunits are generated from the proenzyme in this reaction, and the pyruvate is formed at the N-terminus of the alpha chain, which is derived from the carboxyl end of the proenzyme. The post-translation cleavage follows an unusual pathway, termed non-hydrolytic serinolysis, in which the side chain hydroxyl group of the serine supplies its oxygen atom to form the C-terminus of the beta chain, while the remainder of the serine residue undergoes an oxidative deamination to produce ammonia and the pyruvoyl group blocking the N-terminus of the alpha chain.

It catalyses the reaction S-adenosyl-L-methionine + H(+) = S-adenosyl 3-(methylsulfanyl)propylamine + CO2. Its pathway is amine and polyamine biosynthesis; S-adenosylmethioninamine biosynthesis; S-adenosylmethioninamine from S-adenosyl-L-methionine: step 1/1. Its function is as follows. Catalyzes the decarboxylation of S-adenosylmethionine to S-adenosylmethioninamine (dcAdoMet), the propylamine donor required for the synthesis of the polyamines spermine and spermidine from the diamine putrescine. This Salmonella dublin (strain CT_02021853) protein is S-adenosylmethionine decarboxylase proenzyme.